A 373-amino-acid polypeptide reads, in one-letter code: Protein translocase subunit SecF (373 aa).

A run of 6 helical transmembrane segments spans residues 26 to 46, 142 to 162, 166 to 186, 193 to 213, 251 to 271, and 280 to 300; these read IWYG…AVRG, WQGL…AFEW, LAAF…YALV, GTVI…VVVF, VVAL…LGAG, and LFVG…PLVA. Residues 322-332 are compositionally biased toward low complexity; sequence QGAAKGESAES. The tract at residues 322–373 is disordered; the sequence is QGAAKGESAESAADEGAYDADEPDDAAPAVVGPRNQPASRGRGRGRPSGKRR. Positions 333-346 are enriched in acidic residues; that stretch reads AADEGAYDADEPDD. Positions 362–373 are enriched in basic residues; it reads GRGRGRPSGKRR.

This sequence belongs to the SecD/SecF family. SecF subfamily. In terms of assembly, forms a complex with SecD. Part of the essential Sec protein translocation apparatus which comprises SecA, SecYEG and auxiliary proteins SecDF. Other proteins may also be involved.

It localises to the cell membrane. Part of the Sec protein translocase complex. Interacts with the SecYEG preprotein conducting channel. SecDF uses the proton motive force (PMF) to complete protein translocation after the ATP-dependent function of SecA. This Streptomyces coelicolor (strain ATCC BAA-471 / A3(2) / M145) protein is Protein translocase subunit SecF.